A 469-amino-acid chain; its full sequence is 6-phospho-beta-galactosidase (469 aa).

Q19, H116, N159, E160, and N297 together coordinate D-galactose 6-phosphate. Catalysis depends on E160, which acts as the Proton donor. Residue E375 is the Nucleophile of the active site. D-galactose 6-phosphate contacts are provided by S428, W429, K435, and Y437.

The protein belongs to the glycosyl hydrolase 1 family.

The catalysed reaction is a 6-phospho-beta-D-galactoside + H2O = D-galactose 6-phosphate + an alcohol. Its pathway is carbohydrate metabolism; lactose degradation; D-galactose 6-phosphate and beta-D-glucose from lactose 6-phosphate: step 1/1. This is 6-phospho-beta-galactosidase from Streptococcus equi subsp. zooepidemicus (strain H70).